The chain runs to 448 residues: MECSATPPKLYPTVDTSTTVAPLPKSSSSSSSTNNNNLYPSINVNDLVNNIFPDPTASDSASAPPLATEEVILTIHGAMVHLIDKSYSVELACGDLEILRLVQGDITVAVFARVGDEIQWPLTKDEPAVKVDESHYFFSLRPVKESESSDHSVNETENEMLNYGLTMASKGQEPMLEKLDKILADYSSFTAEEKQKEENVLDLTAAKETSPEELKGKRKKMVEKQCTAYWTTLAPNVEDYSGVAAKLIAAGSGQLIKGILWCGDLTMDRLMWGNDFMKKKLSKAEKERQVSPGTLKRLKRVKKMTKMTEKVANGVLSGVVKVSGFFSSSVINSKAGQKLFGLLPGEMVLATLDGFNKVCDAVEVAGRHVMKTTSDVTTEIVDHKYGAKTAQATNEGLSAAGHAFGTAWTVFKIRQALNPKSAMKPSSLAKTVVKTAAKERKKGKKSSK.

Residues 1–36 (MECSATPPKLYPTVDTSTTVAPLPKSSSSSSSTNNN) are disordered. Residues 1–56 (MECSATPPKLYPTVDTSTTVAPLPKSSSSSSSTNNNNLYPSINVNDLVNNIFPDPT) constitute a chloroplast transit peptide. Over residues 26–36 (SSSSSSSTNNN) the composition is skewed to low complexity. The Senescence domain occupies 248–416 (IAAGSGQLIK…AWTVFKIRQA (169 aa)). The disordered stretch occupies residues 422–448 (AMKPSSLAKTVVKTAAKERKKGKKSSK). Positions 439-448 (ERKKGKKSSK) are enriched in basic residues.

In terms of tissue distribution, expressed in leaves (especially in midribs and trichomes), apical meristemic regions, stems, roots and flowers.

The protein resides in the plastid. The protein localises to the chloroplast. The protein is Senescence/dehydration-associated protein At4g35985, chloroplastic of Arabidopsis thaliana (Mouse-ear cress).